We begin with the raw amino-acid sequence, 461 residues long: Fumarate hydratase class II (461 aa).

Substrate-binding positions include 98 to 100 (SGT), 129 to 132 (HPND), 139 to 141 (SSN), and Thr-187. The active-site Proton donor/acceptor is His-188. Ser-318 is an active-site residue. Substrate is bound by residues Ser-319 and 324-326 (KVN).

It belongs to the class-II fumarase/aspartase family. Fumarase subfamily. Homotetramer.

Its subcellular location is the cytoplasm. The catalysed reaction is (S)-malate = fumarate + H2O. Its pathway is carbohydrate metabolism; tricarboxylic acid cycle; (S)-malate from fumarate: step 1/1. Functionally, involved in the TCA cycle. Catalyzes the stereospecific interconversion of fumarate to L-malate. This Rickettsia prowazekii (strain Madrid E) protein is Fumarate hydratase class II.